The following is a 501-amino-acid chain: Cytochrome P450 2J6 (501 aa).

Cys-447 lines the heme pocket.

This sequence belongs to the cytochrome P450 family. Heme is required as a cofactor.

It is found in the endoplasmic reticulum membrane. The protein resides in the microsome membrane. The enzyme catalyses an organic molecule + reduced [NADPH--hemoprotein reductase] + O2 = an alcohol + oxidized [NADPH--hemoprotein reductase] + H2O + H(+). The chain is Cytochrome P450 2J6 (Cyp2j6) from Mus musculus (Mouse).